The following is a 124-amino-acid chain: Small ribosomal subunit protein uS12 (124 aa).

Position 89 is a 3-methylthioaspartic acid (Asp-89).

It belongs to the universal ribosomal protein uS12 family. As to quaternary structure, part of the 30S ribosomal subunit. Contacts proteins S8 and S17. May interact with IF1 in the 30S initiation complex.

In terms of biological role, with S4 and S5 plays an important role in translational accuracy. Its function is as follows. Interacts with and stabilizes bases of the 16S rRNA that are involved in tRNA selection in the A site and with the mRNA backbone. Located at the interface of the 30S and 50S subunits, it traverses the body of the 30S subunit contacting proteins on the other side and probably holding the rRNA structure together. The combined cluster of proteins S8, S12 and S17 appears to hold together the shoulder and platform of the 30S subunit. This is Small ribosomal subunit protein uS12 from Arthrobacter sp. (strain FB24).